Consider the following 103-residue polypeptide: Pseudonajatoxin b homolog (103 aa).

The signal sequence occupies residues 1 to 21 (MKTLLLTLVVVTIVCLDLGYT). Disulfide bonds link cysteine 24/cysteine 42, cysteine 35/cysteine 63, cysteine 48/cysteine 52, cysteine 67/cysteine 79, and cysteine 80/cysteine 85.

It belongs to the three-finger toxin family. Long-chain subfamily. Type II alpha-neurotoxin sub-subfamily. In terms of tissue distribution, expressed by the venom gland.

Its subcellular location is the secreted. Functionally, binds with high affinity to muscular (alpha-1/CHRNA1) and neuronal (alpha-7/CHRNA7) nicotinic acetylcholine receptor (nAChR) and inhibits acetylcholine from binding to the receptor, thereby impairing neuromuscular and neuronal transmission. The polypeptide is Pseudonajatoxin b homolog (Pseudonaja textilis (Eastern brown snake)).